The primary structure comprises 265 residues: Probable S-methyl-5'-thioinosine phosphorylase (265 aa).

Phosphate is bound by residues Ser15 and 55 to 56 (RH). A substrate-binding site is contributed by Met187. Phosphate is bound at residue Thr188. Substrate is bound at residue 211–213 (NYA).

It belongs to the PNP/MTAP phosphorylase family. MTAP subfamily. In terms of assembly, homotrimer.

The enzyme catalyses S-methyl-5'-thioinosine + phosphate = 5-(methylsulfanyl)-alpha-D-ribose 1-phosphate + hypoxanthine. It functions in the pathway purine metabolism; purine nucleoside salvage. Its function is as follows. Catalyzes the reversible phosphorylation of S-methyl-5'-thioinosine (MTI) to hypoxanthine and 5-methylthioribose-1-phosphate. Involved in the breakdown of S-methyl-5'-thioadenosine (MTA), a major by-product of polyamine biosynthesis. Catabolism of (MTA) occurs via deamination to MTI and phosphorolysis to hypoxanthine. The sequence is that of Probable S-methyl-5'-thioinosine phosphorylase from Thermodesulfovibrio yellowstonii (strain ATCC 51303 / DSM 11347 / YP87).